A 769-amino-acid polypeptide reads, in one-letter code: Probable beta-glucosidase M (769 aa).

An N-terminal signal peptide occupies residues 1–22 (MHSNVGLAGLAGLLATASVCLS). 3 N-linked (GlcNAc...) asparagine glycosylation sites follow: asparagine 28, asparagine 75, and asparagine 262. Aspartate 290 is an active-site residue. 7 N-linked (GlcNAc...) asparagine glycosylation sites follow: asparagine 318, asparagine 325, asparagine 396, asparagine 437, asparagine 510, asparagine 546, and asparagine 625.

It belongs to the glycosyl hydrolase 3 family.

The protein localises to the secreted. It carries out the reaction Hydrolysis of terminal, non-reducing beta-D-glucosyl residues with release of beta-D-glucose.. It participates in glycan metabolism; cellulose degradation. In terms of biological role, beta-glucosidases are one of a number of cellulolytic enzymes involved in the degradation of cellulosic biomass. Catalyzes the last step releasing glucose from the inhibitory cellobiose. The protein is Probable beta-glucosidase M (bglM) of Aspergillus fumigatus (strain CBS 144.89 / FGSC A1163 / CEA10) (Neosartorya fumigata).